A 143-amino-acid chain; its full sequence is Sporulation-specific protein 73 (143 aa).

This sequence belongs to the SPO73 family. As to quaternary structure, interacts with SPO71.

It localises to the cytoplasm. The protein localises to the prospore membrane. Its function is as follows. Required for spore wall assembly and ascus formation. Involved in the formation and elongation of prospore membranes. The sequence is that of Sporulation-specific protein 73 from Saccharomyces cerevisiae (strain ATCC 204508 / S288c) (Baker's yeast).